The primary structure comprises 428 residues: Probable protein phosphatase 2C 5 (428 aa).

In terms of domain architecture, PPM-type phosphatase spans 25–297 (RSEKVEKPFV…DDTTCVVVDI (273 aa)). Mn(2+) is bound by residues Asp73, Gly74, Asp249, and Asp288.

It belongs to the PP2C family. Requires Mg(2+) as cofactor. Mn(2+) serves as cofactor.

The enzyme catalyses O-phospho-L-seryl-[protein] + H2O = L-seryl-[protein] + phosphate. It carries out the reaction O-phospho-L-threonyl-[protein] + H2O = L-threonyl-[protein] + phosphate. The polypeptide is Probable protein phosphatase 2C 5 (Arabidopsis thaliana (Mouse-ear cress)).